The following is a 401-amino-acid chain: Phosphoglycerate kinase 3, cytosolic (401 aa).

11 residues coordinate (2R)-3-phosphoglycerate: Val-24, Asp-25, Asn-27, Arg-41, Ser-63, His-64, Gly-66, Arg-67, Arg-122, His-154, and Arg-155. Gly-200 lines the ADP pocket. Gly-200 provides a ligand contact to CDP. 2 residues coordinate AMP: Lys-202 and Lys-206. Lys-206 serves as a coordination point for ATP. Gly-224 serves as a coordination point for ADP. Gly-224 is a binding site for CDP. Residues Gly-225 and Gly-297 each contribute to the AMP site. Gly-225, Gly-297, and Asn-321 together coordinate ATP. 2 residues coordinate CDP: Gly-322 and Phe-327. Phe-327 contributes to the ADP binding site. Glu-328 is an AMP binding site. Residues Glu-328, Asp-359, and Ser-360 each coordinate ATP. Asp-359 contributes to the Mg(2+) binding site.

The protein belongs to the phosphoglycerate kinase family. Monomer. It depends on Mg(2+) as a cofactor. In terms of tissue distribution, expressed in roots, leaves and inflorescence.

Its subcellular location is the cytoplasm. The enzyme catalyses (2R)-3-phosphoglycerate + ATP = (2R)-3-phospho-glyceroyl phosphate + ADP. It functions in the pathway carbohydrate degradation; glycolysis; pyruvate from D-glyceraldehyde 3-phosphate: step 2/5. This is Phosphoglycerate kinase 3, cytosolic from Arabidopsis thaliana (Mouse-ear cress).